We begin with the raw amino-acid sequence, 93 residues long: Large ribosomal subunit protein eL43 (93 aa).

The C4-type zinc finger occupies 39–60; it reads CEFCGKYGVKRKAVGIWGCKDC.

Belongs to the eukaryotic ribosomal protein eL43 family.

The chain is Large ribosomal subunit protein eL43 (RPL37A) from Brassica rapa subsp. rapa (Turnip).